A 199-amino-acid chain; its full sequence is Putative ATP-dependent Clp protease proteolytic subunit-like (199 aa).

It belongs to the peptidase S14 family. In terms of assembly, component of the chloroplastic Clp protease core complex.

The protein localises to the plastid. It localises to the cyanelle. In terms of biological role, has lost the two conserved residues (Ser and His) proposed to be part of the active site. Therefore it could be inactive. This chain is Putative ATP-dependent Clp protease proteolytic subunit-like (clpP-B), found in Cyanophora paradoxa.